Reading from the N-terminus, the 818-residue chain is Dapper 1-A (818 aa).

Over residues 1 to 10 (MKPIPSPEPP) the composition is skewed to pro residues. Disordered regions lie at residues 1-30 (MKPI…WERH), 60-80 (VLSP…PRSD), 122-144 (IDSE…LSDG), 455-486 (NVTP…SALL), and 510-530 (ESSS…SSSQ). The interval 1–337 (MKPIPSPEPP…PVRTNKPRTS (337 aa)) is interaction with tcf7l1-A. Positions 21 to 30 (DKGEAEWERH) are enriched in basic and acidic residues. A coiled-coil region spans residues 79-130 (SDEQKLLEENISLLKKQLNCLRKRDAGLLSQLHELDKQINDLKIDSEKTEET). Positions 122-132 (IDSEKTEETDS) are enriched in basic and acidic residues. A compositionally biased stretch (polar residues) spans 455–485 (NVTPNAPANLPNASSSVCNGSPRESTQNSAL). Basic and acidic residues predominate over residues 512–524 (SSFEERPPLDFKS). The short motif at 815–818 (MTTV) is the PDZ-binding element.

It belongs to the dapper family. In terms of assembly, interacts with dbf4 and tcf7l1-A. Interacts with dvl2/dsh via the C-terminus. Expressed in the animal and dorsal marginal regions at late blastula and early gastrula stages. Expressed predominantly in the anterior neural plate at neurulation. Expressed mainly in the ectodermal placodes, including the eye anlagen and the otic vesicle, at later stages of development.

It localises to the cytoplasm. Its subcellular location is the nucleus. Its function is as follows. Involved in regulation of intracellular signaling pathways during development. Specifically thought to play a role in canonical and/or non-canonical Wnt signaling pathways through interaction with DSH (Dishevelled) family proteins. Binds to dvl2/dsh and impedes the degradation of beta-catenin (ctnnb1-A and possibly ctnnb1-B), thereby enhancing the transcriptional activation of target genes of the Wnt signaling pathway. Also promotes catenin delta/ctnnd1 stability which in turn promotes zbtb33/kaiso sequestration and thus is involved in the regulation of zbtb33/kaiso-mediated transcriptional repression. May also bind to and directly stimulate the transcriptional activity of tcf7l1-A. Required for eye development and neural patterning. The protein is Dapper 1-A (dact1-a) of Xenopus laevis (African clawed frog).